Reading from the N-terminus, the 266-residue chain is 3-methyl-2-oxobutanoate hydroxymethyltransferase (266 aa).

Residues D45 and D84 each contribute to the Mg(2+) site. Residues 45–46 (DS), D84, and K112 each bind 3-methyl-2-oxobutanoate. Residue E114 coordinates Mg(2+). Catalysis depends on E181, which acts as the Proton acceptor.

The protein belongs to the PanB family. As to quaternary structure, homodecamer; pentamer of dimers. Mg(2+) is required as a cofactor.

The protein resides in the cytoplasm. It carries out the reaction 3-methyl-2-oxobutanoate + (6R)-5,10-methylene-5,6,7,8-tetrahydrofolate + H2O = 2-dehydropantoate + (6S)-5,6,7,8-tetrahydrofolate. Its pathway is cofactor biosynthesis; (R)-pantothenate biosynthesis; (R)-pantoate from 3-methyl-2-oxobutanoate: step 1/2. Functionally, catalyzes the reversible reaction in which hydroxymethyl group from 5,10-methylenetetrahydrofolate is transferred onto alpha-ketoisovalerate to form ketopantoate. The protein is 3-methyl-2-oxobutanoate hydroxymethyltransferase of Pseudomonas syringae pv. syringae (strain B728a).